The sequence spans 349 residues: MDTIAARALTVIKACNTLKEVRIVVESNVLEILGIAVNRYNGLTLRSVTMRPTSQEQRNEMFYMCLDMILAAANLNVGNISPDYIQNLATIGVLATPEIPYTMESANEIARMSGETGTWGPDRQPFGYFLAAPEVTQHGRFRQRVGQNVTTSIVSSTLAQVSMNAGARGDIQALFQNQNDPVMIYFVWRRIGTFSNAAGNAQDTPQGVTLNVGGVNMRAGVIIAYDGQAPVNVNNPGLGQGMIEIEVIYYLSLDKTMTQYPSLQAHIFNVYSYKNPLWHGLRAAILNRTTLPNNIPPIYPPHDRENVLLIILLSALADAFSVLAPDFNLFGVVPIQGPINRAVAQNAYV.

2 N-linked (GlcNAc...) asparagine; by host glycosylation sites follow: Asn-148 and Asn-287.

Belongs to the orbivirus VP7 family.

It is found in the virion. Functionally, the VP7 protein is one of the five proteins (with VP1, VP3, VP4, and VP6) which form the inner capsid of the virus. The protein is Core protein VP7 (Segment-7) of Epizootic hemorrhagic disease virus 1 (EHDV-1).